A 127-amino-acid polypeptide reads, in one-letter code: MQQRGLAIVALAVCAALHASEAILPIASSCCTEVSHHISRRLLERVNMCRIQRADGDCDLAAVILHVKRRRICVSPHNHTVKQWMKVQAAKKNGKGNVCHRKKHHGKRNSNRAHQGKHETYGHKTPY.

The first 19 residues, 1–19, serve as a signal peptide directing secretion; sequence MQQRGLAIVALAVCAALHA. Intrachain disulfides connect C30–C58 and C31–C73. An N-linked (GlcNAc...) asparagine glycan is attached at N78. The span at 92 to 115 shows a compositional bias: basic residues; sequence KNGKGNVCHRKKHHGKRNSNRAHQ. Residues 92 to 127 are disordered; sequence KNGKGNVCHRKKHHGKRNSNRAHQGKHETYGHKTPY. A compositionally biased stretch (basic and acidic residues) spans 116 to 127; the sequence is GKHETYGHKTPY.

This sequence belongs to the intercrine beta (chemokine CC) family. As to expression, preferentially expressed by epithelial cells of diverse tissues including normal and pathological colon, salivary gland, mammary gland, trachea and rectum. Also found in prostate, spleen, thyroid, psoriasis skin and in lower levels in peripheral blood leukocytes, small intestine, Peyer patches, stomach and normal skin.

The protein localises to the secreted. In terms of biological role, chemotactic activity for resting CD4, CD8 T-cells and eosinophils. Binds to CCR3 and CCR10 and induces calcium mobilization in a dose-dependent manner. The chain is C-C motif chemokine 28 (CCL28) from Homo sapiens (Human).